Here is a 160-residue protein sequence, read N- to C-terminus: MTDAVLELPAATFDLPLSLSGGTQTTLRAHAGHWLVIYFYPKDSTPGCTTEGLDFNALLPEFDKAGAKILGVSRDSVKSHDNFCAKQGFAFPLVSDGDEALCRAFDVIKEKNMYGKQVLGIERSTFLLSPEGQVVQAWRKVKVAGHADAVLAALKAHAKQ.

In terms of domain architecture, Thioredoxin spans 4–159 (AVLELPAATF…VLAALKAHAK (156 aa)). The active-site Cysteine sulfenic acid (-SOH) intermediate is cysteine 48. Cysteines 48 and 84 form a disulfide.

This sequence belongs to the peroxiredoxin family. BCP/PrxQ subfamily. Monomer.

The enzyme catalyses a hydroperoxide + [thioredoxin]-dithiol = an alcohol + [thioredoxin]-disulfide + H2O. Its function is as follows. Thiol-specific peroxidase that catalyzes the reduction of hydrogen peroxide and organic hydroperoxides to water and alcohols, respectively. Plays a role in cell protection against oxidative stress by detoxifying peroxides and as sensor of hydrogen peroxide-mediated signaling events. The polypeptide is Peroxiredoxin Bcp (bcp) (Xanthomonas campestris pv. campestris (strain ATCC 33913 / DSM 3586 / NCPPB 528 / LMG 568 / P 25)).